The sequence spans 724 residues: Pre-mRNA-splicing factor CLF1 (724 aa).

HAT repeat units follow at residues 55–87, 89–121, 123–155, 157–188, 190–221, 223–262, 264–298, 308–340, 352–386, 396–432, 434–465, 467–499, 501–534, 536–567, 585–626, and 635–667; these read EFQA…WEAS, NEYE…MELK, RNIN…LEEL, LNVS…LEER, NELD…FEED, GQPD…METR, KEFE…FEKQ, TVLG…LEED, VEPM…LWLQ, KDYD…FEIR, LDVS…LEMR, REFD…VESA, EDFE…FEAG, GERE…MEIA, GDAD…EHGD, and DMLP…DDEK. The tract at residues 681 to 724 is disordered; it reads QAWAQQRAGQGEEGGLSYDLPSDSESENEDEDGDNREEEGMDQD. Residues 702-724 are compositionally biased toward acidic residues; it reads SDSESENEDEDGDNREEEGMDQD.

It belongs to the crooked-neck family. Associated with the spliceosome.

It localises to the nucleus. Functionally, involved in pre-mRNA splicing and cell cycle progression. Required for the spliceosome assembly and initiation of the DNA replication. The sequence is that of Pre-mRNA-splicing factor CLF1 (CLF1) from Cryptococcus neoformans var. grubii serotype A (strain H99 / ATCC 208821 / CBS 10515 / FGSC 9487) (Filobasidiella neoformans var. grubii).